A 477-amino-acid chain; its full sequence is Glycogen synthase (477 aa).

An ADP-alpha-D-glucose-binding site is contributed by Lys-15.

Belongs to the glycosyltransferase 1 family. Bacterial/plant glycogen synthase subfamily.

It carries out the reaction [(1-&gt;4)-alpha-D-glucosyl](n) + ADP-alpha-D-glucose = [(1-&gt;4)-alpha-D-glucosyl](n+1) + ADP + H(+). It functions in the pathway glycan biosynthesis; glycogen biosynthesis. Synthesizes alpha-1,4-glucan chains using ADP-glucose. In Shigella flexneri serotype 5b (strain 8401), this protein is Glycogen synthase.